Reading from the N-terminus, the 77-residue chain is MSKSTILAIFMIVLVLGKVTKETQGQEMCRDILMKAKNCDEGTCDTLCKQKWKGNGSCFPNVYTYRKSCLCTFPCKT.

The signal sequence occupies residues 1 to 25 (MSKSTILAIFMIVLVLGKVTKETQG). 4 disulfides stabilise this stretch: Cys29–Cys75, Cys39–Cys58, Cys44–Cys69, and Cys48–Cys71.

This sequence belongs to the DEFL family.

The protein resides in the secreted. In Arabidopsis thaliana (Mouse-ear cress), this protein is Putative defensin-like protein 118 (LCR52).